The primary structure comprises 732 residues: Polyribonucleotide nucleotidyltransferase (732 aa).

Mg(2+) contacts are provided by aspartate 503 and aspartate 509. Residues 570 to 629 form the KH domain; sequence PRLTAIQVPVESIGLIIGKGGETIRSITEETGAEINIEDDGTVTIACSSNEGTKGAVEII. The 75-residue stretch at 639–713 folds into the S1 motif domain; sequence GTVYIGKVRD…GKTRFALSIK (75 aa).

The protein belongs to the polyribonucleotide nucleotidyltransferase family. Requires Mg(2+) as cofactor.

It is found in the cytoplasm. It catalyses the reaction RNA(n+1) + phosphate = RNA(n) + a ribonucleoside 5'-diphosphate. Its function is as follows. Involved in mRNA degradation. Catalyzes the phosphorolysis of single-stranded polyribonucleotides processively in the 3'- to 5'-direction. This is Polyribonucleotide nucleotidyltransferase from Chlorobium phaeovibrioides (strain DSM 265 / 1930) (Prosthecochloris vibrioformis (strain DSM 265)).